The chain runs to 1117 residues: MGAPGLRAATAALGLLLCAGLGRAGPAGSGGHGAPGQLLDDDAQRPCPAACHCLGDLLDCSRRRLVRLPDPLPAWVTRLDLSHNRLSFIQTSSLSHLQSLQEVKLNNNELETIPNLGSISANIRQLSLAGNAIDKILPEQLEAFQSLETLDLSNNNISELRTAFPPLQLKYLYINNNRVSSMEPGYFDNLASTLLVLKLNRNRISAIPPKMFKLPQLQHLELNRNKIKNVDGLTFQGLGALKSLKMQRNGVTKLMDGAFWGLSNMEVLQLDHNNLTEITKGWLYGLLMLRELHLSQNAINRISPDAWEFCQKLSELDLTFNHLSRLDDSSFLGLSLLNALHIGNNKVSYIADCAFRGLTSLKTLDLRNNEISWTIEDMSGAFSGLDRLRQLILQGNRIRSITKKAFAGLDTLEHLDLSGNAIMSLQSNAFSQMKKLQQLHLNTSSLLCDCQLRWLPQWVAENNFQSFVNASCAHPQLLKGRSIFTVSPDGFVCDDFPKPQITVQPETQSAIKGSDVSFTCSAASSSDSPMTFAWKKDNEALQDAEMENYAHLRAQGGELMEYTTILRLRNVEFTSEGKYQCVISNHFGSSYSVKAKLTINMLPSFTKTPMDLTIRAGAMARLECAAVGHPAPQIAWQKDGGTDFPAARERRMHVMPEDDVFFIVDVKIEDIGVYSCTAQNSAGSVSANATLTVLETPSFLRPLLDRTVTKGETAVLQCIAGGSPPPRLNWTKDDSPLVVTERHFFAAGNQLLIIVDSDVSDAGKYTCEMSNTLGTERGNVRLSVIPTPTCDSPHMTAPSLDGDGWATVGVVIIAVVCCVVGTSLVWVVIIYHTRRRNEDCSITNTDETNLPADIPSYLSSQGTLADRQDGYISSESGSHHQFVTSSGGGFFLPQHDGAGTCHFDDSSEADVEAASDPFLCPFVGSTGPVYLQGNLYSPDPFEVYLPGCSSDPRTALMDHCESSYVKQDRFSCARPSEEPCERSLKSIPWPHSRKLTDSTYPPNEGHTVQTLCLNKSSVDFSTGPEPGSATSSNSFMGTFGKPLRRPHLDAFSSSAQPPDCQPRPCHGKSLSSPELDSESEENDKERTDFREENHRCTYQQIFHTYRTPDCQPCDSDT.

A signal peptide spans 1–24 (MGAPGLRAATAALGLLLCAGLGRA). Residues 38-74 (LLDDDAQRPCPAACHCLGDLLDCSRRRLVRLPDPLPA) form the LRRNT domain. 15 LRR repeats span residues 75-98 (WVTRLDLSHNRLSFIQTSSLSHLQ), 99-120 (SLQEVKLNNNELETIPNLGSIS), 122-143 (NIRQLSLAGNAIDKILPEQLEA), 146-168 (SLETLDLSNNNISELRTAFPPLQ), 169-189 (LKYLYINNNRVSSMEPGYFDN), 193-214 (TLLVLKLNRNRISAIPPKMFKL), 216-237 (QLQHLELNRNKIKNVDGLTFQG), 240-261 (ALKSLKMQRNGVTKLMDGAFWG), 264-285 (NMEVLQLDHNNLTEITKGWLYG), 288-309 (MLRELHLSQNAINRISPDAWEF), 312-333 (KLSELDLTFNHLSRLDDSSFLG), 336-357 (LLNALHIGNNKVSYIADCAFRG), 360-382 (SLKTLDLRNNEISWTIEDMSGAF), 387-408 (RLRQLILQGNRIRSITKKAFAG), and 411-432 (TLEHLDLSGNAIMSLQSNAFSQ). An N-linked (GlcNAc...) asparagine glycan is attached at Asn156. Asn274 carries N-linked (GlcNAc...) asparagine glycosylation. N-linked (GlcNAc...) asparagine glycans are attached at residues Asn442 and Asn469. The LRRCT domain occupies 444–495 (SSLLCDCQLRWLPQWVAENNFQSFVNASCAHPQLLKGRSIFTVSPDGFVCDD). 3 Ig-like C2-type domains span residues 499–598 (PQIT…AKLT), 603–692 (PSFT…ATLT), and 697–783 (PSFL…VRLS). 2 cysteine pairs are disulfide-bonded: Cys520-Cys581 and Cys624-Cys676. Asn688 and Asn729 each carry an N-linked (GlcNAc...) asparagine glycan. Cys718 and Cys767 form a disulfide bridge. The helical transmembrane segment at 810 to 830 (VVIIAVVCCVVGTSLVWVVII) threads the bilayer. The N-linked (GlcNAc...) asparagine glycan is linked to Asn1014. Residues 1019-1093 (DFSTGPEPGS…KERTDFREEN (75 aa)) are disordered. Over residues 1083–1093 (DKERTDFREEN) the composition is skewed to basic and acidic residues.

Interacts with EGFR, ERBB2 and ERBB4 (in vitro). As to expression, widely expressed.

It localises to the cell membrane. Its subcellular location is the cytoplasmic vesicle membrane. Functionally, plays a role in craniofacial and inner ear morphogenesis during embryonic development. Acts within the otic vesicle epithelium to control formation of the lateral semicircular canal in the inner ear, possibly by restricting the expression of NTN1. In Mus musculus (Mouse), this protein is Leucine-rich repeats and immunoglobulin-like domains protein 3 (Lrig3).